The sequence spans 504 residues: UDP-N-acetylmuramoylalanine--D-glutamate ligase (504 aa).

132 to 138 (GTNGKTT) provides a ligand contact to ATP. Positions 286–295 (DRDASDEPAP) are enriched in basic and acidic residues. Positions 286-305 (DRDASDEPAPKRRRKNEVAT) are disordered.

Belongs to the MurCDEF family.

Its subcellular location is the cytoplasm. It catalyses the reaction UDP-N-acetyl-alpha-D-muramoyl-L-alanine + D-glutamate + ATP = UDP-N-acetyl-alpha-D-muramoyl-L-alanyl-D-glutamate + ADP + phosphate + H(+). It functions in the pathway cell wall biogenesis; peptidoglycan biosynthesis. Functionally, cell wall formation. Catalyzes the addition of glutamate to the nucleotide precursor UDP-N-acetylmuramoyl-L-alanine (UMA). The sequence is that of UDP-N-acetylmuramoylalanine--D-glutamate ligase from Paraburkholderia xenovorans (strain LB400).